We begin with the raw amino-acid sequence, 261 residues long: Cytochrome c oxidase subunit 3 (261 aa).

The Mitochondrial matrix segment spans residues methionine 1–proline 15. The helical transmembrane segment at tryptophan 16–tryptophan 34 threads the bilayer. Topologically, residues phenylalanine 35–tyrosine 40 are mitochondrial intermembrane. The helical transmembrane segment at threonine 41–threonine 66 threads the bilayer. Residues tyrosine 67–threonine 72 are Mitochondrial matrix-facing. A helical transmembrane segment spans residues lysine 73–serine 105. Residues leucine 106 to glutamate 128 lie on the Mitochondrial intermembrane side of the membrane. The helical transmembrane segment at valine 129–methionine 152 threads the bilayer. Residues glutamate 153–asparagine 155 lie on the Mitochondrial matrix side of the membrane. The helical transmembrane segment at arginine 156 to glutamate 183 threads the bilayer. Residues alanine 184–aspartate 190 are Mitochondrial intermembrane-facing. A helical membrane pass occupies residues glycine 191–threonine 223. Residues leucine 224–histidine 232 are Mitochondrial matrix-facing. Residues phenylalanine 233–isoleucine 256 form a helical membrane-spanning segment. Residues tyrosine 257 to serine 261 are Mitochondrial intermembrane-facing.

Belongs to the cytochrome c oxidase subunit 3 family. Component of the cytochrome c oxidase (complex IV, CIV), a multisubunit enzyme composed of 14 subunits. The complex is composed of a catalytic core of 3 subunits MT-CO1, MT-CO2 and MT-CO3, encoded in the mitochondrial DNA, and 11 supernumerary subunits COX4I, COX5A, COX5B, COX6A, COX6B, COX6C, COX7A, COX7B, COX7C, COX8 and NDUFA4, which are encoded in the nuclear genome. The complex exists as a monomer or a dimer and forms supercomplexes (SCs) in the inner mitochondrial membrane with NADH-ubiquinone oxidoreductase (complex I, CI) and ubiquinol-cytochrome c oxidoreductase (cytochrome b-c1 complex, complex III, CIII), resulting in different assemblies (supercomplex SCI(1)III(2)IV(1) and megacomplex MCI(2)III(2)IV(2)).

It localises to the mitochondrion inner membrane. The enzyme catalyses 4 Fe(II)-[cytochrome c] + O2 + 8 H(+)(in) = 4 Fe(III)-[cytochrome c] + 2 H2O + 4 H(+)(out). Component of the cytochrome c oxidase, the last enzyme in the mitochondrial electron transport chain which drives oxidative phosphorylation. The respiratory chain contains 3 multisubunit complexes succinate dehydrogenase (complex II, CII), ubiquinol-cytochrome c oxidoreductase (cytochrome b-c1 complex, complex III, CIII) and cytochrome c oxidase (complex IV, CIV), that cooperate to transfer electrons derived from NADH and succinate to molecular oxygen, creating an electrochemical gradient over the inner membrane that drives transmembrane transport and the ATP synthase. Cytochrome c oxidase is the component of the respiratory chain that catalyzes the reduction of oxygen to water. Electrons originating from reduced cytochrome c in the intermembrane space (IMS) are transferred via the dinuclear copper A center (CU(A)) of subunit 2 and heme A of subunit 1 to the active site in subunit 1, a binuclear center (BNC) formed by heme A3 and copper B (CU(B)). The BNC reduces molecular oxygen to 2 water molecules using 4 electrons from cytochrome c in the IMS and 4 protons from the mitochondrial matrix. The sequence is that of Cytochrome c oxidase subunit 3 (MT-CO3) from Ornithorhynchus anatinus (Duckbill platypus).